Reading from the N-terminus, the 154-residue chain is Ribosomal RNA large subunit methyltransferase H (154 aa).

S-adenosyl-L-methionine-binding positions include L70, G102, and 121-126 (LSRMTL).

This sequence belongs to the RNA methyltransferase RlmH family. Homodimer.

Its subcellular location is the cytoplasm. The enzyme catalyses pseudouridine(1915) in 23S rRNA + S-adenosyl-L-methionine = N(3)-methylpseudouridine(1915) in 23S rRNA + S-adenosyl-L-homocysteine + H(+). Functionally, specifically methylates the pseudouridine at position 1915 (m3Psi1915) in 23S rRNA. The sequence is that of Ribosomal RNA large subunit methyltransferase H from Citrifermentans bemidjiense (strain ATCC BAA-1014 / DSM 16622 / JCM 12645 / Bem) (Geobacter bemidjiensis).